Reading from the N-terminus, the 271-residue chain is MEKEIYKMDFNDMTFKDIKDIVDGMKKVENIECLIYINDILMKDKRKTVQNLSQSINKFICRREEEIVRLKKMYDFDKKFANNVLIAGVDEVGRGPLAGPIVAAAVILDLNYKNHNDLFYGLKDSKKLRAKERENLSHIIKDKALYYNIFELDNHMIDTSGIAWCNNEVLKKSTLGLEVTPGIVISDGFSIKNINIKNEYIIKGDAKSASIAAASIIAKVYRDKKMEEYSKIYPHYGFEKNSGYGTDEHTKALKKYGPCPIHRMSFLSNYI.

Residues 84 to 271 (VLIAGVDEVG…HRMSFLSNYI (188 aa)) form the RNase H type-2 domain. A divalent metal cation-binding residues include Asp-90, Glu-91, and Asp-187.

This sequence belongs to the RNase HII family. Mn(2+) is required as a cofactor. The cofactor is Mg(2+).

It is found in the cytoplasm. It catalyses the reaction Endonucleolytic cleavage to 5'-phosphomonoester.. Its function is as follows. Endonuclease that specifically degrades the RNA of RNA-DNA hybrids. This is Ribonuclease HII from Clostridium tetani (strain Massachusetts / E88).